The primary structure comprises 177 residues: Large ribosomal subunit protein uL6 (177 aa).

A compositionally biased stretch (basic and acidic residues) spans 152–171 (RPPEPYKGKGVRYDDEEVRR). The tract at residues 152 to 177 (RPPEPYKGKGVRYDDEEVRRKEAKKK) is disordered.

Belongs to the universal ribosomal protein uL6 family. Part of the 50S ribosomal subunit.

Functionally, this protein binds to the 23S rRNA, and is important in its secondary structure. It is located near the subunit interface in the base of the L7/L12 stalk, and near the tRNA binding site of the peptidyltransferase center. This chain is Large ribosomal subunit protein uL6, found in Shewanella sp. (strain MR-4).